Consider the following 2003-residue polypeptide: Histone acetyltransferase KAT6A (2003 aa).

One can recognise an SAMD1-like winged helix (WH) domain in the interval 1–77; that stretch reads MVKLANPLYT…LNSYKDPDNP (77 aa). The required for activation of RUNX1-1 stretch occupies residues 1 to 144; that stretch reads MVKLANPLYT…CGGSAAPGFH (144 aa). Residues 52-166 form a required for nuclear localization region; it reads ELSVKDGTIL…HGRLLKDGPL (115 aa). The H15 domain maps to 95 to 171; it reads QSVDWNKLLK…KDGPLYRLNT (77 aa). The interaction with PML stretch occupies residues 144–663; the sequence is HQQLRLAIKR…RKGYGRFLID (520 aa). Lys172 is modified (N6-acetyllysine). PHD-type zinc fingers lie at residues 206 to 265 and 262 to 313; these read IPIC…CKTC and CKTC…CRPR. The tract at residues 312–663 is interaction with RUNX1-1; the sequence is PRKKGRKLLQ…RKGYGRFLID (352 aa). Residues 336–377 form a disordered region; it reads GRPKNRLKKQNTVSKGPFSKVRTGPGRGRKRKITVSSQSASS. Lys350 and Lys355 each carry N6-acetyllysine. The residue at position 369 (Thr369) is a Phosphothreonine; by PKB/AKT1. A Phosphoserine modification is found at Ser419. The interval 439 to 466 is disordered; sequence RKKGNRKSSTSDWPTDNQDGWESKQENE. Polar residues predominate over residues 445-458; sequence KSSTSDWPTDNQDG. At Ser472 the chain carries Phosphoserine. The catalytic stretch occupies residues 487–777; it reads IQEQALQKVG…VDPECLRWTP (291 aa). The MYST-type HAT domain maps to 503–777; that stretch reads PQVRCPSVIE…VDPECLRWTP (275 aa). Residues 506-809 are mediates interaction with BRPF1, required for histone H3 acetyltransferase activity; that stretch reads RCPSVIEFGK…EPQGQERELE (304 aa). Residues 536 to 561 form a C2HC MYST-type zinc finger; it reads LYLCEFCLKYMKSRTILQQHMKKCGW. Lys603 is modified (N6-acetyllysine; by autocatalysis). Acetyl-CoA contacts are provided by residues 644 to 648 and 653 to 659; these read SCIMI and QRKGYGR. Glu679 serves as the catalytic Proton donor/acceptor. Position 683 (Ser683) interacts with acetyl-CoA. The interval 784 to 939 is disordered; it reads VVSEDEDEEA…DGKPDIPKGR (156 aa). Ser786 carries the phosphoserine modification. Residues 786 to 798 show a composition bias toward acidic residues; it reads SEDEDEEADEGEK. Residues 799 to 841 show a composition bias toward basic and acidic residues; sequence EEPQGQERELETRVKVGKSVSREKKDQESSSLIETDKKPEVKE. An N6-acetyllysine mark is found at Lys813 and Lys816. A Glycyl lysine isopeptide (Lys-Gly) (interchain with G-Cter in SUMO2) cross-link involves residue Lys836. Basic residues predominate over residues 866–875; the sequence is RRGRCGRKNR. Residues 876 to 890 are compositionally biased toward basic and acidic residues; the sequence is KTQERFGDKDSKMLV. Tyr901 is subject to Phosphotyrosine. The span at 904-917 shows a compositional bias: basic and acidic residues; that stretch reads CEEKSETSQERFTE. A phosphoserine mark is found at Ser941 and Ser954. Residues 983–1083 form a disordered region; that stretch reads GFSESSEEEE…EEEESELFPR (101 aa). Lys1007 bears the N6-acetyllysine mark. Over residues 1009 to 1030 the composition is skewed to basic residues; that stretch reads TLKRKKPILHRRRRVRKRKHHN. Residues 1031–1042 show a composition bias toward low complexity; sequence SSVVTETISETT. Composition is skewed to acidic residues over residues 1043–1053 and 1065–1079; these read EVLDEPFEDSD and FEME…EESE. Phosphoserine is present on residues Ser1090, Ser1091, and Ser1115. Disordered regions lie at residues 1096-1174, 1197-1438, 1455-1533, 1546-1568, and 1631-1707; these read RCQS…RKPG, IKPG…GAYQ, HTDE…PSVS, DLGS…STMG, and TCVV…CSMN. The segment covering 1107–1120 has biased composition (acidic residues); it reads EEEEEEEESDDADD. Polar residues predominate over residues 1136–1147; the sequence is NSASLEPDTSTP. Residues 1148–1174 show a composition bias toward basic residues; that stretch reads MKKKKGWPKGKSRKPIHWKKRPGRKPG. Over residues 1204–1229 the composition is skewed to basic and acidic residues; that stretch reads RTQENEEIVEVKEDLLEERKEEMHTE. Acidic residues-rich tracts occupy residues 1230 to 1241 and 1282 to 1299; these read PDEEAEEEEDTT and EEPQ…DEVT. The span at 1317–1334 shows a compositional bias: basic and acidic residues; that stretch reads HLDSLKTKEPEEQPARED. Lys1336 is covalently cross-linked (Glycyl lysine isopeptide (Lys-Gly) (interchain with G-Cter in SUMO2)). Composition is skewed to basic and acidic residues over residues 1352 to 1361 and 1393 to 1414; these read DSRENTKDKD and DSNT…HSEL. Over residues 1473–1490 the composition is skewed to low complexity; that stretch reads HNSPISSIPSHPSQSVRS. 2 stretches are compositionally biased toward polar residues: residues 1502-1523 and 1550-1568; these read GYTQ…NMET and IEST…STMG. An interaction with RUNX1-2 region spans residues 1511 to 1636; that stretch reads GSLSAPSMQN…KSPQTCVVER (126 aa). Positions 1511–1740 are interaction with PML; sequence GSLSAPSMQN…YERIPGDFGA (230 aa). 2 stretches are compositionally biased toward pro residues: residues 1640-1673 and 1682-1698; these read NQQP…PPQP and QPPP…PQQQ. Residues 1912 to 1947 are required for activation of RUNX1-2; sequence SMNMNTLNAMNSYRMTQPMMNSSYHSNPAYMNQTAQ.

This sequence belongs to the MYST (SAS/MOZ) family. Component of the MOZ/MORF complex composed at least of ING5, KAT6A, KAT6B, MEAF6 and one of BRPF1, BRD1/BRPF2 and BRPF3. Interacts with RUNX2. Interacts with RUNX1; phosphorylation of RUNX1 enhances the interaction. Interacts with p53/TP53. Interacts with PML and this interaction positively regulates its acetylation activity towards p53/TP53. Autoacetylated. Autoacetylation at Lys-603 is required for proper function. In terms of processing, phosphorylation at Thr-369 by PKB/AKT1 inhibits its interaction with PML and negatively regulates its acetylation activity towards p53/TP53.

The protein localises to the nucleus. The protein resides in the nucleolus. Its subcellular location is the nucleoplasm. It is found in the PML body. It carries out the reaction L-lysyl-[protein] + acetyl-CoA = N(6)-acetyl-L-lysyl-[protein] + CoA + H(+). Functionally, histone acetyltransferase that acetylates lysine residues in histone H3 and histone H4 (in vitro). Component of the MOZ/MORF complex which has a histone H3 acetyltransferase activity. May act as a transcriptional coactivator for RUNX1 and RUNX2. Acetylates p53/TP53 at 'Lys-120' and 'Lys-382' and controls its transcriptional activity via association with PML. The polypeptide is Histone acetyltransferase KAT6A (Kat6a) (Mus musculus (Mouse)).